A 564-amino-acid polypeptide reads, in one-letter code: MASTSTTIRSHSSSRRGFSANSARLPGVSRSGFSSVSVSRSRGSGGLGGACGGAGFGSRSLYGLGGSKRISIGGGSCAISGGYGSRAGGSYGFGGAGSGFGFGGGAGIGFGLGGGAGLAGGFGGPGFPVCPPGGIQEVTVNQSLLTPLNLQIDPTIQRVRAEEREQIKTLNNKFASFIDKVRFLEQQNKVLETKWTLLQEQGTKTVRQNLEPLFEQYINNLRRQLDSIVGERGRLDSELRGMQDLVEDFKNKYEDEINKRTAAENEFVTLKKDVDAAYMNKVELQAKADTLTDEINFLRALYDAELSQMQTHISDTSVVLSMDNNRNLDLDSIIAEVKAQYEEIAQRSRAEAESWYQTKYEELQVTAGRHGDDLRNTKQEIAEINRMIQRLRSEIDHVKKQCANLQAAIADAEQRGEMALKDAKNKLEGLEDALQKAKQDLARLLKEYQELMNVKLALDVEIATYRKLLEGEECRLNGEGVGQVNISVVQSTVSSGYGGASGVGSGLGLGGGSSYSYGSGLGVGGGFSSSSGRAIGGGLSSVGGGSSTIKYTTTSSSSRKSYKH.

The span at Met1–His11 shows a compositional bias: low complexity. The tract at residues Met1–Ala23 is disordered. Ala2 carries the N-acetylalanine modification. A head region spans residues Ala2–Glu162. The interval Glu163–Leu198 is coil 1A. An IF rod domain is found at Glu163 to Leu476. The segment at Gln199–Tyr217 is linker 1. The tract at residues Ile218–Met309 is coil 1B. Residues Gln310–Ile333 are linker 12. The interval Ile334–Glu472 is coil 2. The tract at residues Glu473–His564 is tail.

The protein belongs to the intermediate filament family. Heterodimer of a type I and a type II keratin. KRT6 isomers associate with KRT16 and/or KRT17. Interacts with TCHP. As to expression, expressed in the corneal epithelium (at protein level).

Its function is as follows. Epidermis-specific type I keratin involved in wound healing. Involved in the activation of follicular keratinocytes after wounding, while it does not play a major role in keratinocyte proliferation or migration. Participates in the regulation of epithelial migration by inhibiting the activity of SRC during wound repair. In Homo sapiens (Human), this protein is Keratin, type II cytoskeletal 6A (KRT6A).